The following is a 1184-amino-acid chain: von Willebrand factor A domain-containing protein 3A (1184 aa).

Residues 1–24 (MKKYRKISIGCFAMATQTSHVFHG) form the signal peptide. Positions 40-62 (GRDSKKPLKQKNMNGLGQNSDNG) are disordered. The span at 50-62 (KNMNGLGQNSDNG) shows a compositional bias: polar residues. Positions 333–357 (TSRDMDELLAEIQKAQSLLSHVQAL) form a coiled coil. A VWFA 1 domain is found at 511–708 (RVVVLLDISA…SIMSEMEKAL (198 aa)). Residue Asn709 is glycosylated (N-linked (GlcNAc...) asparagine). The tract at residues 729 to 780 (LGSSALPKEKPKTLQLRSQPKKLCPPRPTVPLGARMSIKDDPDREKSPPLKS) is disordered. The segment covering 765 to 776 (SIKDDPDREKSP) has biased composition (basic and acidic residues). The VWFA 2 domain occupies 959 to 1131 (KVCILLDTSG…KIHSLLTKGF (173 aa)).

It is found in the secreted. The chain is von Willebrand factor A domain-containing protein 3A (VWA3A) from Homo sapiens (Human).